A 221-amino-acid polypeptide reads, in one-letter code: Telomere repeats-binding bouquet formation protein 2 (221 aa).

Belongs to the TERB2 family. In terms of assembly, component of the MAJIN-TERB1-TERB2 complex, composed of MAJIN, TERB1 and TERB2.

The protein localises to the chromosome. It localises to the telomere. It is found in the nucleus inner membrane. In terms of biological role, meiosis-specific telomere-associated protein involved in meiotic telomere attachment to the nucleus inner membrane, a crucial step for homologous pairing and synapsis. Component of the MAJIN-TERB1-TERB2 complex, which promotes telomere cap exchange by mediating attachment of telomeric DNA to the inner nuclear membrane and replacement of the protective cap of telomeric chromosomes: in early meiosis, the MAJIN-TERB1-TERB2 complex associates with telomeric DNA and the shelterin/telosome complex. During prophase, the complex matures and promotes release of the shelterin/telosome complex from telomeric DNA. The sequence is that of Telomere repeats-binding bouquet formation protein 2 from Bos taurus (Bovine).